Here is a 361-residue protein sequence, read N- to C-terminus: Histidinol-phosphate aminotransferase (361 aa).

N6-(pyridoxal phosphate)lysine is present on lysine 219.

It belongs to the class-II pyridoxal-phosphate-dependent aminotransferase family. Histidinol-phosphate aminotransferase subfamily. In terms of assembly, homodimer. Pyridoxal 5'-phosphate serves as cofactor.

It catalyses the reaction L-histidinol phosphate + 2-oxoglutarate = 3-(imidazol-4-yl)-2-oxopropyl phosphate + L-glutamate. It functions in the pathway amino-acid biosynthesis; L-histidine biosynthesis; L-histidine from 5-phospho-alpha-D-ribose 1-diphosphate: step 7/9. This chain is Histidinol-phosphate aminotransferase, found in Cereibacter sphaeroides (strain ATCC 17023 / DSM 158 / JCM 6121 / CCUG 31486 / LMG 2827 / NBRC 12203 / NCIMB 8253 / ATH 2.4.1.) (Rhodobacter sphaeroides).